A 97-amino-acid chain; its full sequence is Large ribosomal subunit protein uL23 (97 aa).

Belongs to the universal ribosomal protein uL23 family. Part of the 50S ribosomal subunit. Contacts protein L29, and trigger factor when it is bound to the ribosome.

Functionally, one of the early assembly proteins it binds 23S rRNA. One of the proteins that surrounds the polypeptide exit tunnel on the outside of the ribosome. Forms the main docking site for trigger factor binding to the ribosome. This chain is Large ribosomal subunit protein uL23, found in Clostridium perfringens (strain SM101 / Type A).